Consider the following 348-residue polypeptide: N-formyl peptide receptor 2 (348 aa).

Asn1 is a glycosylation site (N-linked (GlcNAc...) asparagine). The Extracellular portion of the chain corresponds to 1–24 (NFSTPLNEYEEGSYESAGYTVLRI). A helical transmembrane segment spans residues 25–47 (LPLVVLGVTFVLGVLGNGLVIWV). At 48–58 (AGFRMTRTVTT) the chain is on the cytoplasmic side. A helical transmembrane segment spans residues 59-80 (ICYLNLALADFSFTATLPFLIV). Residues 81–97 (SMAMGEKWPFGWFLCKL) lie on the Extracellular side of the membrane. A disulfide bond links Cys95 and Cys173. A helical membrane pass occupies residues 98 to 118 (IHIVVDINLFGSVFLIGFIAL). The Cytoplasmic segment spans residues 119–137 (DRCICVLHPVWAQNHRTVS). The chain crosses the membrane as a helical span at residues 138–159 (LAMKVIVGPWILALVLTLPVFL). The Extracellular portion of the chain corresponds to 160 to 202 (FLTTVTIPNGDTYCTFNFASWGGTPEERLKVAITLLTARGIIR). The chain crosses the membrane as a helical span at residues 203-223 (FVIGFSLPMSIVAICYGLIAA). Over 224 to 239 (KIHKKGMIKSSRPLRV) the chain is Cytoplasmic. A helical membrane pass occupies residues 240–263 (LTAVVASFFICWFPFQLVALLGTV). Residues 264–283 (WLKEMLFYGKYKIIDILVNP) are Extracellular-facing. A helical transmembrane segment spans residues 284–303 (TSSLAFFNCCLNPMLYVFVG). Residues 304–348 (QDFRERLIHSLPTSLERALSEDSAPTNDTAANCASPPAETELQAM) lie on the Cytoplasmic side of the membrane. The tract at residues 322-348 (LSEDSAPTNDTAANCASPPAETELQAM) is disordered. Residues 326 to 335 (SAPTNDTAAN) are compositionally biased toward polar residues.

The protein belongs to the G-protein coupled receptor 1 family. Interacts with Amyloid-beta protein 42, product of APP; the interaction takes place at the cell surface and the complex is then rapidly internalized.

It is found in the cell membrane. Low affinity receptor for N-formyl-methionyl peptides, which are powerful neutrophil chemotactic factors. Binding of FMLP to the receptor causes activation of neutrophils. This response is mediated via a G-protein that activates a phosphatidylinositol-calcium second messenger system. Receptor for the chemokine-like protein FAM19A5, mediating FAM19A5-stimulated macrophage chemotaxis and the inhibitory effect on TNFSF11/RANKL-induced osteoclast differentiation. The chain is N-formyl peptide receptor 2 (FPR2) from Pan troglodytes (Chimpanzee).